Reading from the N-terminus, the 106-residue chain is EspC protein homolog (106 aa).

This sequence belongs to the EspC family.

The polypeptide is EspC protein homolog (Mycobacterium leprae (strain TN)).